Reading from the N-terminus, the 253-residue chain is 3-deoxy-manno-octulosonate cytidylyltransferase (253 aa).

It belongs to the KdsB family.

It is found in the cytoplasm. The enzyme catalyses 3-deoxy-alpha-D-manno-oct-2-ulosonate + CTP = CMP-3-deoxy-beta-D-manno-octulosonate + diphosphate. It participates in nucleotide-sugar biosynthesis; CMP-3-deoxy-D-manno-octulosonate biosynthesis; CMP-3-deoxy-D-manno-octulosonate from 3-deoxy-D-manno-octulosonate and CTP: step 1/1. The protein operates within bacterial outer membrane biogenesis; lipopolysaccharide biosynthesis. In terms of biological role, activates KDO (a required 8-carbon sugar) for incorporation into bacterial lipopolysaccharide in Gram-negative bacteria. The polypeptide is 3-deoxy-manno-octulosonate cytidylyltransferase (Proteus mirabilis (strain HI4320)).